The primary structure comprises 635 residues: DNA mismatch repair protein MutL (635 aa).

Belongs to the DNA mismatch repair MutL/HexB family.

In terms of biological role, this protein is involved in the repair of mismatches in DNA. It is required for dam-dependent methyl-directed DNA mismatch repair. May act as a 'molecular matchmaker', a protein that promotes the formation of a stable complex between two or more DNA-binding proteins in an ATP-dependent manner without itself being part of a final effector complex. This Yersinia pestis bv. Antiqua (strain Angola) protein is DNA mismatch repair protein MutL.